The chain runs to 301 residues: GTPase Era (301 aa).

The Era-type G domain maps to 4-173 (KAGFVALIGK…LECISKHLSP (170 aa)). The tract at residues 12–19 (GKPNAGKS) is G1. Residue 12-19 (GKPNAGKS) coordinates GTP. The G2 stretch occupies residues 38–42 (NATRK). The interval 64 to 67 (DTPG) is G3. Residues 64-68 (DTPGL) and 122-125 (SKID) each bind GTP. The tract at residues 122 to 125 (SKID) is G4. The G5 stretch occupies residues 152–154 (LSA). The KH type-2 domain occupies 204-280 (LSDEIPYESD…FLNLQVIAQK (77 aa)).

Belongs to the TRAFAC class TrmE-Era-EngA-EngB-Septin-like GTPase superfamily. Era GTPase family. Monomer.

Its subcellular location is the cytoplasm. The protein resides in the cell inner membrane. An essential GTPase that binds both GDP and GTP, with rapid nucleotide exchange. Plays a role in 16S rRNA processing and 30S ribosomal subunit biogenesis and possibly also in cell cycle regulation and energy metabolism. The chain is GTPase Era from Helicobacter pylori (strain Shi470).